The chain runs to 392 residues: WD repeat-containing protein GTS1 (392 aa).

4 WD repeats span residues 81 to 124, 128 to 167, 171 to 211, and 323 to 368; these read GHSD…QVSR, GNDQ…QVAC, SHMD…NDDD, and GHID…TEIN.

As to expression, expressed in germinating seeds, rosettes leaves, flowers and siliques.

Functionally, involved in the control of plant growth development. Acts as negative regulator of seed germination, cell division in meristematic regions, plant growth and overall biomass accumulation. May function by regulating ribosome activities and biogenesis in plant cells. The protein is WD repeat-containing protein GTS1 of Arabidopsis thaliana (Mouse-ear cress).